The primary structure comprises 307 residues: Protein YIF1A (307 aa).

The segment at 1 to 42 (MNFQQQGYRATKPRARASPPTGGPMLFDDTSSGPPPMNNQNY) is disordered. Residues 1-148 (MNFQQQGYRA…TPRHDVNAPD (148 aa)) are Cytoplasmic-facing. Residues 149 to 169 (LYIPTMAFITYILLAGMALGI) form a helical membrane-spanning segment. Residues 170-184 (QKRFSPEVLGLCAST) lie on the Lumenal side of the membrane. Residues 185–205 (ALVWMIIEVLVMLLSLYLLTV) form a helical membrane-spanning segment. Residues 206–213 (HTDLSTFD) are Cytoplasmic-facing. Residues 214–236 (LVAYSGYKYVGMILTVFCGLLFG) form a helical membrane-spanning segment. Over 237–239 (SDG) the chain is Lumenal. The helical transmembrane segment at 240-259 (YYVALAWSSCALMFFIVRSL) threads the bilayer. The Cytoplasmic portion of the chain corresponds to 260–285 (KMKILSSISADSMGAGASAKPRFRLY). Residues 286-306 (ITVASAAFQPFIIYWLTAHLV) form a helical membrane-spanning segment.

This sequence belongs to the YIF1 family.

It localises to the endoplasmic reticulum membrane. Its subcellular location is the golgi apparatus membrane. The protein localises to the endoplasmic reticulum-Golgi intermediate compartment membrane. In terms of biological role, possible role in transport between endoplasmic reticulum and Golgi. The protein is Protein YIF1A (yif1a) of Danio rerio (Zebrafish).